Reading from the N-terminus, the 595-residue chain is MVCHVFSSFSSSLIRVLEAPLLLPAASASSSSSSSPASRSGGRRRRAAHVRPSPAIYPGRQELASHSSMLPTDFDIKVLIERHEALTDDVQEMLQHQRRRHQKTASGGRERIATVDHLRRLCMDHYFQDEVDDAMDACLLEELAHGGDLLDATLAFRLMREAGHHVSADEVLGRFTDDNGEFRLDYRKDIRGLLSLQDISHMNIGQEASLCKAKEFSTRNLESAINYLEPNLARYVRQSLDHPYHVSLNQYKARHHLSYLQTLPIRCTAMEELALADFQLNKLLHQMEMQEIKRWWMDLGLAQEIPVARDQVQKWFVWMMTAIQGASLSRCRIELTKIVSFVYIVDDIFDLVGTREELSCFTQAIRMWDLAAADSLPSCMRSCFRALHTVTNDIADMVEREHGVNPINHLKKAWAMLFDGFMTETKWLSAGQVPDSEEYLRNGVVTSGVPLVFVHLLFMLGHDVSQNAAEFVDHIPPVISCPAKILRLWDDLGSAKDEAQEGLDGSYKELYLKENPGLAAGEAEEHVRRLIAGEWEELNRECFSASPSRSSPATTFPAGFTQAALNAARMVGVMYGYDGERRLPVLDDYVRMLLF.

The N-terminal 46 residues, 1-46 (MVCHVFSSFSSSLIRVLEAPLLLPAASASSSSSSSPASRSGGRRRR), are a transit peptide targeting the chloroplast. Over residues 27–40 (SASSSSSSSPASRS) the composition is skewed to low complexity. A disordered region spans residues 27–54 (SASSSSSSSPASRSGGRRRRAAHVRPSP). 5 residues coordinate (2E)-geranyl diphosphate: arginine 309, aspartate 346, aspartate 350, arginine 487, and aspartate 490. Positions 346 and 350 each coordinate Mg(2+). Positions 346–350 (DDIFD) match the DDXXD motif motif. The Mg(2+) site is built by aspartate 490, serine 494, and glutamate 498.

Belongs to the terpene synthase family. Tpsb subfamily. Mg(2+) serves as cofactor. The cofactor is Mn(2+).

Its subcellular location is the plastid. The protein localises to the chloroplast. It carries out the reaction (2E)-geranyl diphosphate + H2O = (S)-linalool + diphosphate. It participates in secondary metabolite biosynthesis; terpenoid biosynthesis. Involved in monoterpene (C10) biosynthesis. The major product is S-(+)-linalool. Linalool production is induced by jasmonate in response to pathogen attack, it possesses antibacterial activity and is important for resistance to the bacterial blight pathogen Xanthomonas oryzae pv. oryzae (Xoo). Plants over-expressing linalool synthase display enhanced resistance to Xoo. The chain is S-(+)-linalool synthase, chloroplastic from Oryza sativa subsp. japonica (Rice).